The following is a 329-amino-acid chain: Ribosomal RNA small subunit methyltransferase H (329 aa).

S-adenosyl-L-methionine-binding positions include 46–48 (GGH), D65, F92, D113, and H120. A disordered region spans residues 295-329 (RGAERPSPAEVAANPRAASARLRAAEKIRDTREAA). Residues 317-329 (RAAEKIRDTREAA) are compositionally biased toward basic and acidic residues.

This sequence belongs to the methyltransferase superfamily. RsmH family.

The protein resides in the cytoplasm. It carries out the reaction cytidine(1402) in 16S rRNA + S-adenosyl-L-methionine = N(4)-methylcytidine(1402) in 16S rRNA + S-adenosyl-L-homocysteine + H(+). Functionally, specifically methylates the N4 position of cytidine in position 1402 (C1402) of 16S rRNA. The protein is Ribosomal RNA small subunit methyltransferase H of Acidothermus cellulolyticus (strain ATCC 43068 / DSM 8971 / 11B).